Consider the following 494-residue polypeptide: Ribose import ATP-binding protein RbsA (494 aa).

ABC transporter domains follow at residues 2 to 239 (IDMR…VGRQ) and 251 to 493 (IGEE…TGGN). Residue 34–41 (GENGAGKS) coordinates ATP.

It belongs to the ABC transporter superfamily. Ribose importer (TC 3.A.1.2.1) family. As to quaternary structure, the complex is composed of an ATP-binding protein (RbsA), two transmembrane proteins (RbsC) and a solute-binding protein (RbsB).

The protein resides in the cell membrane. The enzyme catalyses D-ribose(out) + ATP + H2O = D-ribose(in) + ADP + phosphate + H(+). Part of the ABC transporter complex RbsABC involved in ribose import. Responsible for energy coupling to the transport system. The protein is Ribose import ATP-binding protein RbsA of Geobacillus kaustophilus (strain HTA426).